A 250-amino-acid polypeptide reads, in one-letter code: 3-deoxy-manno-octulosonate cytidylyltransferase (250 aa).

Belongs to the KdsB family.

Its subcellular location is the cytoplasm. It carries out the reaction 3-deoxy-alpha-D-manno-oct-2-ulosonate + CTP = CMP-3-deoxy-beta-D-manno-octulosonate + diphosphate. Its pathway is nucleotide-sugar biosynthesis; CMP-3-deoxy-D-manno-octulosonate biosynthesis; CMP-3-deoxy-D-manno-octulosonate from 3-deoxy-D-manno-octulosonate and CTP: step 1/1. It functions in the pathway bacterial outer membrane biogenesis; lipopolysaccharide biosynthesis. Activates KDO (a required 8-carbon sugar) for incorporation into bacterial lipopolysaccharide in Gram-negative bacteria. This Geobacter sulfurreducens (strain ATCC 51573 / DSM 12127 / PCA) protein is 3-deoxy-manno-octulosonate cytidylyltransferase.